A 301-amino-acid chain; its full sequence is Probable porphobilinogen deaminase (301 aa).

Position 241 is an S-(dipyrrolylmethanemethyl)cysteine (C241).

Belongs to the HMBS family. The cofactor is dipyrromethane.

It carries out the reaction 4 porphobilinogen + H2O = hydroxymethylbilane + 4 NH4(+). It participates in porphyrin-containing compound metabolism; protoporphyrin-IX biosynthesis; coproporphyrinogen-III from 5-aminolevulinate: step 2/4. Its function is as follows. Tetrapolymerization of the monopyrrole PBG into the hydroxymethylbilane pre-uroporphyrinogen in several discrete steps. The sequence is that of Probable porphobilinogen deaminase from Pyrobaculum islandicum (strain DSM 4184 / JCM 9189 / GEO3).